A 307-amino-acid polypeptide reads, in one-letter code: Ribosomal protein uL3 glutamine methyltransferase (307 aa).

This sequence belongs to the protein N5-glutamine methyltransferase family. PrmB subfamily.

The enzyme catalyses L-glutaminyl-[ribosomal protein uL3] + S-adenosyl-L-methionine = N(5)-methyl-L-glutaminyl-[ribosomal protein uL3] + S-adenosyl-L-homocysteine + H(+). Methylates large ribosomal subunit protein uL3 on a specific glutamine residue. The protein is Ribosomal protein uL3 glutamine methyltransferase of Burkholderia pseudomallei (strain K96243).